The sequence spans 33 residues: Cytochrome b6-f complex subunit 8 (33 aa).

A helical transmembrane segment spans residues L2–V22.

Belongs to the PetN family. In terms of assembly, the 4 large subunits of the cytochrome b6-f complex are cytochrome b6, subunit IV (17 kDa polypeptide, PetD), cytochrome f and the Rieske protein, while the 4 small subunits are PetG, PetL, PetM and PetN. The complex functions as a dimer.

It is found in the cellular thylakoid membrane. Its function is as follows. Component of the cytochrome b6-f complex, which mediates electron transfer between photosystem II (PSII) and photosystem I (PSI), cyclic electron flow around PSI, and state transitions. This Prochlorococcus marinus (strain MIT 9303) protein is Cytochrome b6-f complex subunit 8.